We begin with the raw amino-acid sequence, 126 residues long: Small ribosomal subunit protein uS11 (126 aa).

It belongs to the universal ribosomal protein uS11 family. Part of the 30S ribosomal subunit. Interacts with proteins S7 and S18. Binds to IF-3.

Functionally, located on the platform of the 30S subunit, it bridges several disparate RNA helices of the 16S rRNA. Forms part of the Shine-Dalgarno cleft in the 70S ribosome. This is Small ribosomal subunit protein uS11 from Orientia tsutsugamushi (strain Boryong) (Rickettsia tsutsugamushi).